A 509-amino-acid chain; its full sequence is Protein Jade-1 (509 aa).

The segment at 1–45 (MKRGRLPSSSEDSDDNGSLSTTWSQNSRSQHRRSSCSRPEDRKPS) is disordered. The interaction with KAT7/HBO1 and histones stretch occupies residues 60 to 80 (DSYQLNPDEYYVLADPWRQEW). The segment at 80–188 (WEKGVQVPVS…EQRCYDNMNH (109 aa)) is interaction with histones. Phosphoserine is present on serine 89. Phosphothreonine is present on threonine 92. Residue lysine 114 forms a Glycyl lysine isopeptide (Lys-Gly) (interchain with G-Cter in SUMO2) linkage. Residues 203-253 (YVVCDVCQSPDGEDGNEMVFCDKCNICVHQACYGILKVPEGSWLCRTCALG) form a PHD-type 1 zinc finger. A C2HC pre-PHD-type zinc finger spans residues 255–289 (QPKCLLCPKKGGAMKPTRSGTKWVHVSCALWIPEV). The PHD-type 2 zinc finger occupies 313–369 (LVCSLCNEKFGASIQCSVKNCRTAFHVTCAFDRGLEMKTILAENDEVKFKSYCPKHS). The segment at 373-399 (KAEEGLGEGTAQENGAPECSPRDPLEP) is disordered.

Belongs to the JADE family. In terms of assembly, component of the HBO1 complex composed at least of ING4 or ING5, KAT7/HBO1, MEAF6, and one of JADE1, JADE2 and JADE3. Interacts with NPHP4.

The protein resides in the nucleus. It is found in the chromosome. It localises to the cytoplasm. The protein localises to the cytoskeleton. Its subcellular location is the cilium basal body. Scaffold subunit of some HBO1 complexes, which have a histone H4 acetyltransferase activity. Plays a key role in HBO1 complex by directing KAT7/HBO1 specificity towards histone H4 acetylation (H4K5ac, H4K8ac and H4K12ac), regulating DNA replication initiation, regulating DNA replication initiation. May also promote acetylation of nucleosomal histone H4 by KAT5. Promotes apoptosis. May act as a renal tumor suppressor. Negatively regulates canonical Wnt signaling; at least in part, cooperates with NPHP4 in this function. This is Protein Jade-1 (JADE1) from Bos taurus (Bovine).